The following is a 113-amino-acid chain: uncharacterized protein (113 aa).

This is an uncharacterized protein from Ureaplasma parvum serovar 3 (strain ATCC 700970).